A 476-amino-acid polypeptide reads, in one-letter code: MKVCCIGAGYVGGPTCAVMALKCPDIVITLVDKSSERIAQWNSDKLPIYEPGLDEVVKKCRNVNLFFSTDIETAIKEADLIFISVNTPTKTCGNGKGRAADLKYVESAARMIAEIAQSNKIVVEKSTVPVRAAESIMHILRANQKPGIHYDILSNPEFLAEGTAINDLLNADRVLIGGEETPEGHQAVEKLSWIYEHWIPKQNILTTNTWSSELSKLAANAFLAQRISSINSLSAVCEATGADVSEVARAVGLDSRIGSKFLQASVGFGGSCFQKDILNLIYICENLNLPEVAAYWQQVIDMNEYQKRRFSQKIIESLFNTVSDKRIAILGFAFKKNTGDTRETAAITVCQTLLEEGAALDIYDPKVEPEQIIDDLTHPSVTESPEKVKKAVQIHSDPYSAVRATHALVICTEWDEFVDLDFKRIYQSMMKPAYIFDGRKILDHERLQQIGFHVQTIGKKYQRTGLLRSWGIVPQL.

NAD(+)-binding positions include 7-12, D32, R37, 85-89, 126-127, and E161; these read GAGYVG, VNTPT, and ST. Residues 157–161, 216–220, R256, and 263–269 each bind substrate; these read EFLAE, KLAAN, and QASVGFG. The active-site Nucleophile is the C272. Residue 272–275 participates in NAD(+) binding; it reads CFQK. 334 to 335 is a substrate binding site; sequence FK. Residue R342 participates in NAD(+) binding. Residue R439 participates in substrate binding.

It belongs to the UDP-glucose/GDP-mannose dehydrogenase family.

The catalysed reaction is UDP-alpha-D-glucose + 2 NAD(+) + H2O = UDP-alpha-D-glucuronate + 2 NADH + 3 H(+). It functions in the pathway nucleotide-sugar biosynthesis; UDP-alpha-D-glucuronate biosynthesis; UDP-alpha-D-glucuronate from UDP-alpha-D-glucose: step 1/1. Functionally, involved in the biosynthesis of glycosaminoglycans; hyaluronan, chondroitin sulfate and heparan sulfate. Required for wingless signaling in different tissues. In Drosophila melanogaster (Fruit fly), this protein is UDP-glucose 6-dehydrogenase (sgl).